A 361-amino-acid polypeptide reads, in one-letter code: Peptide chain release factor 1 (361 aa).

Q237 carries the N5-methylglutamine modification. Residues 286–306 (AKQDQEQAAKRKSLVGSGDRS) form a disordered region.

It belongs to the prokaryotic/mitochondrial release factor family. In terms of processing, methylated by PrmC. Methylation increases the termination efficiency of RF1.

Its subcellular location is the cytoplasm. Its function is as follows. Peptide chain release factor 1 directs the termination of translation in response to the peptide chain termination codons UAG and UAA. This Coxiella burnetii (strain CbuK_Q154) (Coxiella burnetii (strain Q154)) protein is Peptide chain release factor 1.